Here is a 248-residue protein sequence, read N- to C-terminus: Probable transcriptional regulatory protein PsycPRwf_1013 (248 aa).

It belongs to the TACO1 family.

It localises to the cytoplasm. The polypeptide is Probable transcriptional regulatory protein PsycPRwf_1013 (Psychrobacter sp. (strain PRwf-1)).